Here is a 372-residue protein sequence, read N- to C-terminus: Aminomethyltransferase (372 aa).

Belongs to the GcvT family. In terms of assembly, the glycine cleavage system is composed of four proteins: P, T, L and H.

It carries out the reaction N(6)-[(R)-S(8)-aminomethyldihydrolipoyl]-L-lysyl-[protein] + (6S)-5,6,7,8-tetrahydrofolate = N(6)-[(R)-dihydrolipoyl]-L-lysyl-[protein] + (6R)-5,10-methylene-5,6,7,8-tetrahydrofolate + NH4(+). Its function is as follows. The glycine cleavage system catalyzes the degradation of glycine. This Prochlorococcus marinus (strain NATL1A) protein is Aminomethyltransferase.